A 317-amino-acid polypeptide reads, in one-letter code: (2S)-3-sulfopropanediol dehydratase activating enzyme (317 aa).

One can recognise a Radical SAM core domain in the interval 18 to 306 (HDGPGLRTEL…QMLAEYFNQR (289 aa)). Cys-32, Cys-36, Cys-39, Cys-58, Cys-64, Cys-67, Cys-71, Cys-92, Cys-95, Cys-98, and Cys-102 together coordinate [4Fe-4S] cluster. 38 to 40 (WCS) lines the S-adenosyl-L-methionine pocket. 4Fe-4S ferredoxin-type domains are found at residues 49–82 (AQVG…FTRG) and 83–112 (KLTS…LWGK). Residues Gly-142 and 191–193 (DIK) contribute to the S-adenosyl-L-methionine site.

The protein belongs to the organic radical-activating enzymes family. Requires [4Fe-4S] cluster as cofactor.

It carries out the reaction glycyl-[protein] + reduced [flavodoxin] + S-adenosyl-L-methionine = glycin-2-yl radical-[protein] + semiquinone [flavodoxin] + 5'-deoxyadenosine + L-methionine + H(+). Its pathway is organosulfur degradation; alkanesulfonate degradation. In terms of biological role, involved in the degradation of the organosulfur compound 2(S)-dihydroxypropanesulfonate (DHPS). Catalyzes activation of the (2S)-3-sulfopropanediol dehydratase HpfG under anaerobic conditions by generation of an organic free radical on a glycine residue. This is (2S)-3-sulfopropanediol dehydratase activating enzyme from Klebsiella oxytoca.